A 431-amino-acid polypeptide reads, in one-letter code: Histidinol dehydrogenase (431 aa).

Residues Tyr124, Gln187, and Asn210 each contribute to the NAD(+) site. Substrate is bound by residues Ser236, Gln258, and His261. The Zn(2+) site is built by Gln258 and His261. Residues Glu325 and His326 each act as proton acceptor in the active site. His326, Asp359, Glu413, and His418 together coordinate substrate. Asp359 contributes to the Zn(2+) binding site. His418 serves as a coordination point for Zn(2+).

It belongs to the histidinol dehydrogenase family. Zn(2+) is required as a cofactor.

The enzyme catalyses L-histidinol + 2 NAD(+) + H2O = L-histidine + 2 NADH + 3 H(+). The protein operates within amino-acid biosynthesis; L-histidine biosynthesis; L-histidine from 5-phospho-alpha-D-ribose 1-diphosphate: step 9/9. Its function is as follows. Catalyzes the sequential NAD-dependent oxidations of L-histidinol to L-histidinaldehyde and then to L-histidine. The protein is Histidinol dehydrogenase of Legionella pneumophila (strain Lens).